The primary structure comprises 235 residues: Phosphoribosylaminoimidazole-succinocarboxamide synthase (235 aa).

It belongs to the SAICAR synthetase family.

The enzyme catalyses 5-amino-1-(5-phospho-D-ribosyl)imidazole-4-carboxylate + L-aspartate + ATP = (2S)-2-[5-amino-1-(5-phospho-beta-D-ribosyl)imidazole-4-carboxamido]succinate + ADP + phosphate + 2 H(+). It participates in purine metabolism; IMP biosynthesis via de novo pathway; 5-amino-1-(5-phospho-D-ribosyl)imidazole-4-carboxamide from 5-amino-1-(5-phospho-D-ribosyl)imidazole-4-carboxylate: step 1/2. This is Phosphoribosylaminoimidazole-succinocarboxamide synthase from Clostridium novyi (strain NT).